A 65-amino-acid chain; its full sequence is Large ribosomal subunit protein bL35 (65 aa).

3 stretches are compositionally biased toward basic residues: residues 1–18 (MPKMKTKSAAAKRFKRTA), 31–44 (HRFHGKTKKQRRQL), and 55–65 (VKRYKKMIPAK). The disordered stretch occupies residues 1-65 (MPKMKTKSAA…KRYKKMIPAK (65 aa)).

Belongs to the bacterial ribosomal protein bL35 family.

The polypeptide is Large ribosomal subunit protein bL35 (Limosilactobacillus fermentum (strain NBRC 3956 / LMG 18251) (Lactobacillus fermentum)).